Here is a 150-residue protein sequence, read N- to C-terminus: Nitric oxide reductase subunit C (150 aa).

Residues 13–29 (VFYGGSIFFILIFGALT) traverse the membrane as a helical; Signal-anchor segment. Heme c-binding residues include Cys-62, Cys-65, and His-66.

In terms of assembly, heterodimer of cytochromes b (large subunit) and c (small subunit).

The protein resides in the cell membrane. Functionally, component of the anaerobic respiratory chain that transforms nitrate to dinitrogen (denitrification). This Paracoccus denitrificans protein is Nitric oxide reductase subunit C (norC).